Reading from the N-terminus, the 344-residue chain is Serine/threonine-protein kinase ppk13 (344 aa).

ATP is bound by residues 38 to 46 (LGEGGFAFV) and K61. The region spanning 76 to 344 (MKEADYHRKF…LSKIDLQINQ (269 aa)) is the Protein kinase domain. The active-site Proton acceptor is H192.

The protein belongs to the protein kinase superfamily. Ser/Thr protein kinase family.

The protein resides in the endoplasmic reticulum. It localises to the golgi apparatus. It carries out the reaction L-seryl-[protein] + ATP = O-phospho-L-seryl-[protein] + ADP + H(+). It catalyses the reaction L-threonyl-[protein] + ATP = O-phospho-L-threonyl-[protein] + ADP + H(+). The protein is Serine/threonine-protein kinase ppk13 (ppk13) of Schizosaccharomyces pombe (strain 972 / ATCC 24843) (Fission yeast).